The chain runs to 407 residues: Chorismate synthase (407 aa).

NADP(+)-binding residues include R40 and R46. Residues R135–S137, Q256–A257, G300, K315–T319, and R341 contribute to the FMN site.

This sequence belongs to the chorismate synthase family. As to quaternary structure, homotetramer. The cofactor is FMNH2.

It catalyses the reaction 5-O-(1-carboxyvinyl)-3-phosphoshikimate = chorismate + phosphate. The protein operates within metabolic intermediate biosynthesis; chorismate biosynthesis; chorismate from D-erythrose 4-phosphate and phosphoenolpyruvate: step 7/7. Catalyzes the anti-1,4-elimination of the C-3 phosphate and the C-6 proR hydrogen from 5-enolpyruvylshikimate-3-phosphate (EPSP) to yield chorismate, which is the branch point compound that serves as the starting substrate for the three terminal pathways of aromatic amino acid biosynthesis. This reaction introduces a second double bond into the aromatic ring system. This is Chorismate synthase from Mycobacterium leprae (strain Br4923).